A 541-amino-acid polypeptide reads, in one-letter code: MDSKRSLLFMALLFISFLIYQQWQVDYNTPKPEVTEQAQVSEVNSTALTATSDIANDTQAKGRVITLENDVFRLKVNTLGGDVIGSELLNYDAELHSSAPFVLLQNNADKVYIAQSGLVGKNGIDSRAGRANYQVEGDVFKLAEGQQELKVPLIFEKDGVIYRKVFVLKPGSYALEVNFEITNQSPKPIELVPYAQLTHTLVESSGSMAMPTYTGGAYSSSETNYKKYSFEDMEKADLDIHTKAGWVALLQHYFVSAWIPNQDANNTLYTLTNTKKHLGSIGYRSAPIVIENGATETIHTQLWTGPKLQDQMADVANHLDLTVDYGWAWFIAKPLFKLLTLIQSLVQNWGLAIIGVTLVVKAVLYPLTKAQYTSMAKMRMLQPKLQEMRERFGEDRQRMSQEMMKLYKEEKVNPLGGCLPILLQMPIFIALYWTFMEAVELRHAPFFGWVQDLSAQDPYFILPILMGASMFLLQKMSPTPVADPMQQKVMTFMPLIFMVFFLFFPAGLVLYWLASNLITIAQQWLIYRGLEKKGLHTRVKK.

Transmembrane regions (helical) follow at residues 7-27, 345-365, 415-435, 453-473, and 492-512; these read LLFMALLFISFLIYQQWQVDY, LVQNWGLAIIGVTLVVKAVLY, LGGCLPILLQMPIFIALYWTF, LSAQDPYFILPILMGASMFLL, and FMPLIFMVFFLFFPAGLVLYW.

Belongs to the OXA1/ALB3/YidC family. Type 1 subfamily. In terms of assembly, interacts with the Sec translocase complex via SecD. Specifically interacts with transmembrane segments of nascent integral membrane proteins during membrane integration.

It is found in the cell inner membrane. Required for the insertion and/or proper folding and/or complex formation of integral membrane proteins into the membrane. Involved in integration of membrane proteins that insert both dependently and independently of the Sec translocase complex, as well as at least some lipoproteins. Aids folding of multispanning membrane proteins. This chain is Membrane protein insertase YidC, found in Histophilus somni (strain 2336) (Haemophilus somnus).